We begin with the raw amino-acid sequence, 125 residues long: Ribonuclease P protein component (125 aa).

Belongs to the RnpA family. As to quaternary structure, consists of a catalytic RNA component (M1 or rnpB) and a protein subunit.

It catalyses the reaction Endonucleolytic cleavage of RNA, removing 5'-extranucleotides from tRNA precursor.. RNaseP catalyzes the removal of the 5'-leader sequence from pre-tRNA to produce the mature 5'-terminus. It can also cleave other RNA substrates such as 4.5S RNA. The protein component plays an auxiliary but essential role in vivo by binding to the 5'-leader sequence and broadening the substrate specificity of the ribozyme. The protein is Ribonuclease P protein component of Ruegeria pomeroyi (strain ATCC 700808 / DSM 15171 / DSS-3) (Silicibacter pomeroyi).